The chain runs to 377 residues: UDP-N-acetylglucosamine 2-epimerase (377 aa).

Residue His212 is part of the active site.

This sequence belongs to the UDP-N-acetylglucosamine 2-epimerase family. In terms of assembly, homodimer.

It catalyses the reaction UDP-N-acetyl-alpha-D-glucosamine + H2O = aldehydo-N-acetyl-D-mannosamine + UDP + H(+). Functionally, catalyzes the conversion of UDP-N-acetylglucosamine (UDP-GlcNAc) to UDP and N-acetyl-D-mannosamine (ManNAc). This is UDP-N-acetylglucosamine 2-epimerase (siaA) from Neisseria meningitidis serogroup B (strain ATCC BAA-335 / MC58).